We begin with the raw amino-acid sequence, 251 residues long: Gamma-interferon-inducible lysosomal thiol reductase (251 aa).

Residues 1–21 (MFGFRLSVLLFAVCSLSACSC) form the signal peptide. The 39-residue stretch at 22–60 (MFVNSCKYPPSQWCDSRDIAAQCGVLEQCMKFNASPVTV) folds into the Saposin A-type domain. Cys68 and Cys71 form a disulfide bridge. N-linked (GlcNAc...) asparagine glycosylation occurs at Asn108.

It belongs to the GILT family. Dimer; disulfide-linked. As to expression, highly expressed in spleen and kidney. Also detected at lower levels in liver, heart, brain, intestine and gill.

It is found in the secreted. The protein resides in the lysosome. Functionally, lysosomal thiol reductase that can reduce protein disulfide bonds. May facilitate the complete unfolding of proteins destined for lysosomal degradation. Plays an important role in antigen processing. The polypeptide is Gamma-interferon-inducible lysosomal thiol reductase (Carassius auratus (Goldfish)).